We begin with the raw amino-acid sequence, 436 residues long: UDP-N-acetylmuramate--L-alanine ligase (436 aa).

108 to 114 lines the ATP pocket; it reads GAHGKTS.

The protein belongs to the MurCDEF family.

Its subcellular location is the cytoplasm. It catalyses the reaction UDP-N-acetyl-alpha-D-muramate + L-alanine + ATP = UDP-N-acetyl-alpha-D-muramoyl-L-alanine + ADP + phosphate + H(+). It participates in cell wall biogenesis; peptidoglycan biosynthesis. Its function is as follows. Cell wall formation. The chain is UDP-N-acetylmuramate--L-alanine ligase from Bacillus cereus (strain Q1).